We begin with the raw amino-acid sequence, 246 residues long: Probable maleylacetoacetate isomerase 1 (246 aa).

In terms of domain architecture, GST N-terminal spans 32 to 116; the sequence is TKPILYSYWP…YLEETRPQPA (85 aa). Residues 42–47, valine 88, 100–101, glutamine 140, and 144–146 contribute to the glutathione site; these read SSCSWR, DS, and NVS. One can recognise a GST C-terminal domain in the interval 121–241; the sequence is DPVKRAKIRE…HPSTQPDCPP (121 aa).

The protein belongs to the GST superfamily. Zeta family. Requires glutathione as cofactor.

Its subcellular location is the cytoplasm. The enzyme catalyses 4-maleylacetoacetate = 4-fumarylacetoacetate. The catalysed reaction is RX + glutathione = an S-substituted glutathione + a halide anion + H(+). It functions in the pathway amino-acid degradation; L-phenylalanine degradation; acetoacetate and fumarate from L-phenylalanine: step 5/6. In terms of biological role, catalyzes the glutathione dependent oxygenation of dichloroacetic acid to glyoxylic acid in vitro. Possesses low glutathione thioltransferase activity toward 4-hydroxynonenal (4-HNE). Has no glutathione thioltransferase activity with adrenochrome, phenethyl isothiocyanate (PEITC), 5-hydroperoxyeicosatetraenoic acid ((5S)-HpETE), prostaglandin A2 (PGA2) or 2-hydroxyethyldisulfide (HED). This Drosophila melanogaster (Fruit fly) protein is Probable maleylacetoacetate isomerase 1 (GstZ1).